A 149-amino-acid polypeptide reads, in one-letter code: SsrA-binding protein (149 aa).

It belongs to the SmpB family.

Its subcellular location is the cytoplasm. Its function is as follows. Required for rescue of stalled ribosomes mediated by trans-translation. Binds to transfer-messenger RNA (tmRNA), required for stable association of tmRNA with ribosomes. tmRNA and SmpB together mimic tRNA shape, replacing the anticodon stem-loop with SmpB. tmRNA is encoded by the ssrA gene; the 2 termini fold to resemble tRNA(Ala) and it encodes a 'tag peptide', a short internal open reading frame. During trans-translation Ala-aminoacylated tmRNA acts like a tRNA, entering the A-site of stalled ribosomes, displacing the stalled mRNA. The ribosome then switches to translate the ORF on the tmRNA; the nascent peptide is terminated with the 'tag peptide' encoded by the tmRNA and targeted for degradation. The ribosome is freed to recommence translation, which seems to be the essential function of trans-translation. This chain is SsrA-binding protein, found in Anaplasma phagocytophilum (strain HZ).